Consider the following 437-residue polypeptide: 3-phosphoshikimate 1-carboxyvinyltransferase (437 aa).

Lys-24, Ser-25, and Arg-29 together coordinate 3-phosphoshikimate. Residue Lys-24 participates in phosphoenolpyruvate binding. 2 residues coordinate phosphoenolpyruvate: Gly-95 and Arg-123. Positions 168, 170, 317, and 344 each coordinate 3-phosphoshikimate. Gln-170 contacts phosphoenolpyruvate. The Proton acceptor role is filled by Asp-317. Phosphoenolpyruvate-binding residues include Arg-348 and Arg-390.

This sequence belongs to the EPSP synthase family. As to quaternary structure, monomer.

The protein localises to the cytoplasm. It catalyses the reaction 3-phosphoshikimate + phosphoenolpyruvate = 5-O-(1-carboxyvinyl)-3-phosphoshikimate + phosphate. It functions in the pathway metabolic intermediate biosynthesis; chorismate biosynthesis; chorismate from D-erythrose 4-phosphate and phosphoenolpyruvate: step 6/7. In terms of biological role, catalyzes the transfer of the enolpyruvyl moiety of phosphoenolpyruvate (PEP) to the 5-hydroxyl of shikimate-3-phosphate (S3P) to produce enolpyruvyl shikimate-3-phosphate and inorganic phosphate. This Wolinella succinogenes (strain ATCC 29543 / DSM 1740 / CCUG 13145 / JCM 31913 / LMG 7466 / NCTC 11488 / FDC 602W) (Vibrio succinogenes) protein is 3-phosphoshikimate 1-carboxyvinyltransferase.